The following is a 311-amino-acid chain: Protein translocase subunit SecF (311 aa).

A run of 6 helical transmembrane segments spans residues 23-42 (VSYSFSIILSLISLIWISIY), 140-160 (IEAGAMAMLFSFLAIMVYIGV), 164-184 (WYFGFGILIALVHDVILALGF), 194-214 (LSTIAAVLTIIGYSVNDSVVI), 246-266 (ILTVITTLLANLALILFGGKA), and 272-292 (VLVFFGIIAGTYSSIFISAPI).

This sequence belongs to the SecD/SecF family. SecF subfamily. In terms of assembly, forms a complex with SecD. Part of the essential Sec protein translocation apparatus which comprises SecA, SecYEG and auxiliary proteins SecDF-YajC and YidC.

The protein localises to the cell inner membrane. Its function is as follows. Part of the Sec protein translocase complex. Interacts with the SecYEG preprotein conducting channel. SecDF uses the proton motive force (PMF) to complete protein translocation after the ATP-dependent function of SecA. This Rickettsia prowazekii (strain Madrid E) protein is Protein translocase subunit SecF.